Reading from the N-terminus, the 251-residue chain is 3-deoxy-manno-octulosonate cytidylyltransferase (251 aa).

It belongs to the KdsB family.

The protein localises to the cytoplasm. It catalyses the reaction 3-deoxy-alpha-D-manno-oct-2-ulosonate + CTP = CMP-3-deoxy-beta-D-manno-octulosonate + diphosphate. It functions in the pathway nucleotide-sugar biosynthesis; CMP-3-deoxy-D-manno-octulosonate biosynthesis; CMP-3-deoxy-D-manno-octulosonate from 3-deoxy-D-manno-octulosonate and CTP: step 1/1. Its pathway is bacterial outer membrane biogenesis; lipopolysaccharide biosynthesis. Its function is as follows. Activates KDO (a required 8-carbon sugar) for incorporation into bacterial lipopolysaccharide in Gram-negative bacteria. The protein is 3-deoxy-manno-octulosonate cytidylyltransferase of Rhizobium johnstonii (strain DSM 114642 / LMG 32736 / 3841) (Rhizobium leguminosarum bv. viciae).